The following is an 811-amino-acid chain: Receptor-like protein 46 (811 aa).

A signal peptide spans 1–21 (MSKQCLLSCFLFFCFFIPQLS). Topologically, residues 22–782 (FSCPQDQRQS…EEEDKEEEET (761 aa)) are extracellular. Asn46, Asn71, Asn128, and Asn143 each carry an N-linked (GlcNAc...) asparagine glycan. 24 LRR repeats span residues 104–128 (INSL…AFVN), 129–153 (LTSL…LFSL), 155–177 (NLQR…IKEL), 178–201 (KNLQ…IGSL), 203–225 (ELLT…VSRL), 226–249 (TKLK…IGNL), 251–273 (NLST…IHNL), 275–298 (NLET…WLFG), 299–322 (LQKL…GYVF), 324–348 (QFKL…LKNQ), 349–369 (TALV…PKWL), 370–395 (ADLK…LFQR), 397–419 (SLYY…IGES), 421–442 (VMVL…ITKI), 443–466 (PFLK…RPES), 468–488 (LEWL…YFGG), 490–510 (TSML…NFRN), 511–534 (LSYL…LISQ), 536–560 (SSSV…ISNL), 561–583 (TSLK…SLGN), 643–665 (LYTL…LGNL), 666–688 (KSLK…SFGD), 690–713 (EKVE…LSKL), and 714–738 (SELN…QLDR). Residue Asn215 is glycosylated (N-linked (GlcNAc...) asparagine). Asn251 carries an N-linked (GlcNAc...) asparagine glycan. An N-linked (GlcNAc...) asparagine glycan is attached at Asn347. 3 N-linked (GlcNAc...) asparagine glycosylation sites follow: Asn376, Asn407, and Asn430. Asn499 and Asn510 each carry an N-linked (GlcNAc...) asparagine glycan. 3 N-linked (GlcNAc...) asparagine glycosylation sites follow: Asn546, Asn559, and Asn583. 2 N-linked (GlcNAc...) asparagine glycosylation sites follow: Asn672 and Asn701. Asn747 carries an N-linked (GlcNAc...) asparagine glycan. Residues 783–803 (IFSWNAAAIGCSCGFLIAVVF) form a helical membrane-spanning segment. The Cytoplasmic portion of the chain corresponds to 804 to 811 (MSYNELWK).

This sequence belongs to the RLP family.

Its subcellular location is the cell membrane. This chain is Receptor-like protein 46, found in Arabidopsis thaliana (Mouse-ear cress).